We begin with the raw amino-acid sequence, 218 residues long: Recombination protein RecR (218 aa).

The C4-type zinc finger occupies Cys-56–Cys-71. The region spanning Gly-79–Pro-195 is the Toprim domain.

Belongs to the RecR family.

In terms of biological role, may play a role in DNA repair. It seems to be involved in an RecBC-independent recombinational process of DNA repair. It may act with RecF and RecO. The protein is Recombination protein RecR of Corynebacterium glutamicum (strain R).